A 345-amino-acid chain; its full sequence is NADPH dehydrogenase (345 aa).

23-26 (SPMC) contacts FMN. Substrate is bound at residue Tyr28. FMN is bound by residues Ala60 and Gln102. 164–167 (HGAH) provides a ligand contact to substrate. FMN-binding positions include Arg215 and 307-308 (GR).

Belongs to the NADH:flavin oxidoreductase/NADH oxidase family. NamA subfamily. In terms of assembly, homotetramer. The cofactor is FMN.

It carries out the reaction A + NADPH + H(+) = AH2 + NADP(+). Its function is as follows. Catalyzes the reduction of the double bond of an array of alpha,beta-unsaturated aldehydes and ketones. It also reduces the nitro group of nitroester and nitroaromatic compounds. It could have a role in detoxification processes. This chain is NADPH dehydrogenase, found in Bacillus cereus (strain ZK / E33L).